The following is a 506-amino-acid chain: NADH-quinone oxidoreductase subunit N 2 (506 aa).

14 helical membrane-spanning segments follow: residues 11 to 31 (SLAY…LVVW), 44 to 64 (LVIL…YFLA), 82 to 102 (FSNL…LFLV), 117 to 137 (SGEL…MAAS), 140 to 160 (LLLI…LAGF), 175 to 195 (VIFG…IFGI), 222 to 242 (VFVG…AAPF), 254 to 274 (PTPV…AVLI), 289 to 309 (GVAT…MTVG), 323 to 345 (LAYS…SGAG), 356 to 376 (YCFM…ESGG), 394 to 414 (AAAM…AGFI), 419 to 439 (LFSA…VVGV), and 472 to 492 (LLGG…VYWG).

It belongs to the complex I subunit 2 family. In terms of assembly, NDH-1 is composed of 14 different subunits. Subunits NuoA, H, J, K, L, M, N constitute the membrane sector of the complex.

It localises to the cell inner membrane. It catalyses the reaction a quinone + NADH + 5 H(+)(in) = a quinol + NAD(+) + 4 H(+)(out). Its function is as follows. NDH-1 shuttles electrons from NADH, via FMN and iron-sulfur (Fe-S) centers, to quinones in the respiratory chain. The immediate electron acceptor for the enzyme in this species is believed to be ubiquinone. Couples the redox reaction to proton translocation (for every two electrons transferred, four hydrogen ions are translocated across the cytoplasmic membrane), and thus conserves the redox energy in a proton gradient. This Sorangium cellulosum (strain So ce56) (Polyangium cellulosum (strain So ce56)) protein is NADH-quinone oxidoreductase subunit N 2.